Here is a 112-residue protein sequence, read N- to C-terminus: uncharacterized protein (112 aa).

An HTH cro/C1-type domain is found at 6 to 60 (LRQLRKAHKLTMEQLAEKIGIAKSSYGGYEAESKKPPLDKLVILARLYDVSVDYI). The segment at residues 17 to 36 (MEQLAEKIGIAKSSYGGYEA) is a DNA-binding region (H-T-H motif).

This is an uncharacterized protein from Bacillus subtilis (strain 168).